The primary structure comprises 601 residues: Glutathione-regulated potassium-efflux system protein KefB (601 aa).

13 helical membrane-spanning segments follow: residues 4 to 24 (SDFL…VPLA), 29 to 49 (IGAV…GLGF), 55 to 75 (EILH…GLEL), 87 to 107 (IFGV…GLLM), 115 to 135 (AAVV…LQLM), 152 to 172 (VLLF…LLAG), 177 to 197 (HFDW…LIGG), 207 to 227 (FIAA…LVLG), 230 to 250 (LFMD…GVLL), 268 to 288 (GLLL…GVLY), 291 to 311 (LLWV…VLYL), 324 to 344 (MQFA…FSSA), and 356 to 376 (ALLL…MKLV). Positions 400–519 (KPQVIVVGFG…AGVTQFSRET (120 aa)) constitute an RCK N-terminal domain.

Belongs to the monovalent cation:proton antiporter 2 (CPA2) transporter (TC 2.A.37) family. KefB subfamily. As to quaternary structure, interacts with the regulatory subunit KefG.

It is found in the cell inner membrane. Functionally, pore-forming subunit of a potassium efflux system that confers protection against electrophiles. Catalyzes K(+)/H(+) antiport. This is Glutathione-regulated potassium-efflux system protein KefB from Escherichia coli O127:H6 (strain E2348/69 / EPEC).